Consider the following 325-residue polypeptide: Eukaryotic translation initiation factor 3 subunit I (325 aa).

5 WD repeats span residues 8–47 (GHER…RLGT), 50–89 (GHTG…QLAL), 144–183 (CSDS…QLSN), 186–225 (EHTK…HLKT), and 283–324 (GHFG…FEFE).

This sequence belongs to the eIF-3 subunit I family. As to quaternary structure, component of the eukaryotic translation initiation factor 3 (eIF-3) complex, which is composed of 13 subunits: EIF3A, EIF3B, EIF3C, EIF3D, EIF3E, EIF3F, EIF3G, EIF3H, EIF3I, EIF3J, EIF3K, EIF3L and EIF3M.

Its subcellular location is the cytoplasm. Component of the eukaryotic translation initiation factor 3 (eIF-3) complex, which is involved in protein synthesis of a specialized repertoire of mRNAs and, together with other initiation factors, stimulates binding of mRNA and methionyl-tRNAi to the 40S ribosome. The eIF-3 complex specifically targets and initiates translation of a subset of mRNAs involved in cell proliferation. This is Eukaryotic translation initiation factor 3 subunit I from Taeniopygia guttata (Zebra finch).